The following is a 175-amino-acid chain: Large ribosomal subunit protein uL10 (175 aa).

It belongs to the universal ribosomal protein uL10 family. In terms of assembly, part of the ribosomal stalk of the 50S ribosomal subunit. The N-terminus interacts with L11 and the large rRNA to form the base of the stalk. The C-terminus forms an elongated spine to which L12 dimers bind in a sequential fashion forming a multimeric L10(L12)X complex.

In terms of biological role, forms part of the ribosomal stalk, playing a central role in the interaction of the ribosome with GTP-bound translation factors. This chain is Large ribosomal subunit protein uL10, found in Desulfotalea psychrophila (strain LSv54 / DSM 12343).